Consider the following 141-residue polypeptide: 6,7-dimethyl-8-ribityllumazine synthase (141 aa).

Residues Phe-13, Ser-45 to Glu-47, and Ala-69 to Ile-71 each bind 5-amino-6-(D-ribitylamino)uracil. Asp-74–Thr-75 provides a ligand contact to (2S)-2-hydroxy-3-oxobutyl phosphate. His-77 functions as the Proton donor in the catalytic mechanism. Position 102 (Leu-102) interacts with 5-amino-6-(D-ribitylamino)uracil. Arg-117 provides a ligand contact to (2S)-2-hydroxy-3-oxobutyl phosphate.

It belongs to the DMRL synthase family.

The enzyme catalyses (2S)-2-hydroxy-3-oxobutyl phosphate + 5-amino-6-(D-ribitylamino)uracil = 6,7-dimethyl-8-(1-D-ribityl)lumazine + phosphate + 2 H2O + H(+). Its pathway is cofactor biosynthesis; riboflavin biosynthesis; riboflavin from 2-hydroxy-3-oxobutyl phosphate and 5-amino-6-(D-ribitylamino)uracil: step 1/2. Its function is as follows. Catalyzes the formation of 6,7-dimethyl-8-ribityllumazine by condensation of 5-amino-6-(D-ribitylamino)uracil with 3,4-dihydroxy-2-butanone 4-phosphate. This is the penultimate step in the biosynthesis of riboflavin. This is 6,7-dimethyl-8-ribityllumazine synthase from Methanopyrus kandleri (strain AV19 / DSM 6324 / JCM 9639 / NBRC 100938).